The primary structure comprises 372 residues: Homoserine O-acetyltransferase (372 aa).

One can recognise an AB hydrolase-1 domain in the interval 43–353; sequence NAILIFHALT…DKGHDSFLLK (311 aa). The active-site Nucleophile is Ser148. Arg218 contributes to the substrate binding site. Residues Asp314 and His347 contribute to the active site. Asp348 provides a ligand contact to substrate.

It belongs to the AB hydrolase superfamily. MetX family. In terms of assembly, homodimer.

The protein localises to the cytoplasm. The enzyme catalyses L-homoserine + acetyl-CoA = O-acetyl-L-homoserine + CoA. Its pathway is amino-acid biosynthesis; L-methionine biosynthesis via de novo pathway; O-acetyl-L-homoserine from L-homoserine: step 1/1. In terms of biological role, transfers an acetyl group from acetyl-CoA to L-homoserine, forming acetyl-L-homoserine. The polypeptide is Homoserine O-acetyltransferase (Pelagibacter ubique (strain HTCC1062)).